The chain runs to 188 residues: HTH-type transcriptional regulator LmrA (188 aa).

The HTH tetR-type domain maps to 4–64 (GDSREKILSA…IEAVNEMKEY (61 aa)). The segment at residues 27–46 (GLNQIIKESGAPKGSLYYHF) is a DNA-binding region (H-T-H motif).

In terms of biological role, acts as a repressor of the lincomycin-resistance (lmrAB) and yxaGH operons. In Bacillus subtilis (strain 168), this protein is HTH-type transcriptional regulator LmrA (lmrA).